A 388-amino-acid polypeptide reads, in one-letter code: Staphopain A (388 aa).

An N-terminal signal peptide occupies residues 1 to 25 (MKRNFPKLIALSLIFSLSITPIANA). Residues 26–214 (ESNSNIKAKD…TSQFKSNNYT (189 aa)) constitute a propeptide that is removed on maturation. Catalysis depends on residues cysteine 238, histidine 334, and asparagine 355.

This sequence belongs to the peptidase C47 family. In terms of assembly, in the cytoplasm, prematurely activated/folded ScpA forms a stable non-covalent complex with ScpB. Post-translationally, cleavage leads to the activation of ScpA probably by an auto-catalytic manner.

The protein localises to the secreted. It carries out the reaction Broad endopeptidase action on proteins including elastin, but rather limited hydrolysis of small-molecule substrates. Assays are conveniently made with hemoglobin, casein or Z-Phe-Arg-NHMec as substrate.. Prematurely activated/folded staphopain A is inhibited by staphostatin A (ScpB), which is probably required to protect staphylococcal cytoplasmic proteins from degradation by ScpA. Also inactivated by heavy metal ions such as Hg(2+) or Ag(+), iodoacetamide, E-64 and human plasma. Cysteine protease that plays an important role in the inhibition of host innate immune response. Cleaves host elastins found in connective tissues, pulmonary surfactant protein A in the lungs, and the chemokine receptor CXCR2 on leukocytes. Proteolytic cleavage of surfactant protein A impairs bacterial phagocytosis by neutrophils while CXCR2 degradation blocks neutrophil activation and chemotaxis. Additionally, promotes vascular leakage by activating the plasma kallikerin/kinin system, resulting in hypotension. In Staphylococcus aureus, this protein is Staphopain A (sspP).